The chain runs to 1325 residues: Zinc finger MYM-type protein 6 (1325 aa).

MYM-type zinc fingers lie at residues 113-151 (QLFC…PKDV), 163-206 (KDFC…RFEV), 213-248 (HGLC…SSGP), 296-334 (ELFC…QYHL), 342-443 (YSFC…KPEL), 451-485 (FLFC…KETV), 492-531 (KPFC…LVEN), and 538-572 (EEFC…SESI). Position 397 is a phosphoserine (Ser-397). The tract at residues 665–733 (ESTQEDAMKF…NDAELDSPPS (69 aa)) is disordered. Polar residues predominate over residues 695–706 (PVTQTKATSCKP).

In terms of tissue distribution, expressed at high levels in heart, skeletal muscle, kidney and liver.

Its subcellular location is the nucleus. Functionally, plays a role in the regulation of cell morphology and cytoskeletal organization. The chain is Zinc finger MYM-type protein 6 (ZMYM6) from Homo sapiens (Human).